Here is a 239-residue protein sequence, read N- to C-terminus: Small ribosomal subunit protein eS6B (239 aa).

Phosphoserine is present on residues serine 148, serine 235, and serine 236.

The protein belongs to the eukaryotic ribosomal protein eS6 family. Component of the small ribosomal subunit (SSU). Mature yeast ribosomes consist of a small (40S) and a large (60S) subunit. The 40S small subunit contains 1 molecule of ribosomal RNA (18S rRNA) and at least 33 different proteins. The large 60S subunit contains 3 rRNA molecules (25S, 5.8S and 5S rRNA) and at least 46 different proteins. Interacts with snoRNA U3. uS11 interacts with MPP10. Component of the ribosomal small subunit (SSU) processome composed of at least 40 protein subunits and snoRNA U3.

The protein resides in the cytoplasm. In terms of biological role, component of the ribosome, a large ribonucleoprotein complex responsible for the synthesis of proteins in the cell. The small ribosomal subunit (SSU) binds messenger RNAs (mRNAs) and translates the encoded message by selecting cognate aminoacyl-transfer RNA (tRNA) molecules. The large subunit (LSU) contains the ribosomal catalytic site termed the peptidyl transferase center (PTC), which catalyzes the formation of peptide bonds, thereby polymerizing the amino acids delivered by tRNAs into a polypeptide chain. The nascent polypeptides leave the ribosome through a tunnel in the LSU and interact with protein factors that function in enzymatic processing, targeting, and the membrane insertion of nascent chains at the exit of the ribosomal tunnel. eS6 is involved in nucleolar processing of pre-18S ribosomal RNA and ribosome assembly. The chain is Small ribosomal subunit protein eS6B (rps602) from Schizosaccharomyces pombe (strain 972 / ATCC 24843) (Fission yeast).